Consider the following 837-residue polypeptide: Protein translocase subunit SecA (837 aa).

Residues Q87, 105–109 (GEGKT), and D494 each bind ATP. The disordered stretch occupies residues 788–837 (HKESKSDLEYSDSENTETKKKPKRRSEPKVGRNDPCPCGSGKKYKKCCGK). Zn(2+) contacts are provided by C823, C825, C834, and C835.

Belongs to the SecA family. Monomer and homodimer. Part of the essential Sec protein translocation apparatus which comprises SecA, SecYEG and auxiliary proteins SecDF-YajC and YidC. Zn(2+) serves as cofactor.

It is found in the cell inner membrane. The protein localises to the cytoplasm. The catalysed reaction is ATP + H2O + cellular proteinSide 1 = ADP + phosphate + cellular proteinSide 2.. Functionally, part of the Sec protein translocase complex. Interacts with the SecYEG preprotein conducting channel. Has a central role in coupling the hydrolysis of ATP to the transfer of proteins into and across the cell membrane, serving as an ATP-driven molecular motor driving the stepwise translocation of polypeptide chains across the membrane. In Maridesulfovibrio salexigens (strain ATCC 14822 / DSM 2638 / NCIMB 8403 / VKM B-1763) (Desulfovibrio salexigens), this protein is Protein translocase subunit SecA.